A 274-amino-acid chain; its full sequence is Thiamine kinase (274 aa).

This sequence belongs to the thiamine kinase family.

The enzyme catalyses thiamine + ATP = thiamine phosphate + ADP + H(+). The protein operates within cofactor biosynthesis; thiamine diphosphate biosynthesis; thiamine phosphate from thiamine: step 1/1. In terms of biological role, catalyzes the ATP-dependent phosphorylation of thiamine to thiamine phosphate. Is involved in thiamine salvage. The sequence is that of Thiamine kinase from Escherichia coli O157:H7 (strain EC4115 / EHEC).